A 180-amino-acid polypeptide reads, in one-letter code: MNTVLSRANSLFAFSLSVMAALTFGCFITTAFKDRSVPVRLHVSRIMLKNVEDFTGPRERSDLGFITFDITADLENIFDWNVKQLFLYLSAEYSTKNNALNQVVLWDKIVLRGDNPKLLLKDMKTKYFFFDDGNGLKGNRNVTLTLSWNVVPNAGILPLVTGSGHVSVPFPDTYEITKSY.

The Cytoplasmic segment spans residues 1-11; that stretch reads MNTVLSRANSL. The chain crosses the membrane as a helical; Signal-anchor for type II membrane protein span at residues 12-32; that stretch reads FAFSLSVMAALTFGCFITTAF. Residues 33–180 lie on the Lumenal side of the membrane; it reads KDRSVPVRLH…PDTYEITKSY (148 aa). Residue N141 is glycosylated (N-linked (GlcNAc...) asparagine).

It belongs to the SPCS3 family. In terms of assembly, component of the signal peptidase complex paralog A (SPC-A) composed of a catalytic subunit SEC11A and three accessory subunits SPCS1, SPCS2 and SPCS3. Component of the signal peptidase complex paralog C (SPC-C) composed of a catalytic subunit SEC11C and three accessory subunits SPCS1, SPCS2 and SPCS3. Within the complex, interacts with SEC11A or SEC11C and SPCS1. The complex induces a local thinning of the ER membrane which is used to measure the length of the signal peptide (SP) h-region of protein substrates. This ensures the selectivity of the complex towards h-regions shorter than 18-20 amino acids. Occurs in 2 differentially glycosylated forms (22 kDa and 23 kDa).

It is found in the endoplasmic reticulum membrane. Its function is as follows. Essential component of the signal peptidase complex (SPC) which catalyzes the cleavage of N-terminal signal sequences from nascent proteins as they are translocated into the lumen of the endoplasmic reticulum. Essential for the SPC catalytic activity, possibly by stabilizing and positioning the active center of the complex close to the lumenal surface. The protein is Signal peptidase complex subunit 3 (SPCS3) of Canis lupus familiaris (Dog).